A 161-amino-acid chain; its full sequence is GTP-dependent dephospho-CoA kinase (161 aa).

6 residues coordinate GTP: Asp37, Ile38, Asp56, Lys58, Glu112, and Asp135.

Belongs to the GTP-dependent DPCK family.

The enzyme catalyses 3'-dephospho-CoA + GTP = GDP + CoA + H(+). The protein operates within cofactor biosynthesis; coenzyme A biosynthesis. Catalyzes the GTP-dependent phosphorylation of the 3'-hydroxyl group of dephosphocoenzyme A to form coenzyme A (CoA). This Methanococcus aeolicus (strain ATCC BAA-1280 / DSM 17508 / OCM 812 / Nankai-3) protein is GTP-dependent dephospho-CoA kinase.